Reading from the N-terminus, the 305-residue chain is Olfactory receptor 9G9 (305 aa).

Over 1–27 (MQRSNHTVTEFILLGFTTDPGMQLGLF) the chain is Extracellular. A glycan (N-linked (GlcNAc...) asparagine) is linked at Asn5. The helical transmembrane segment at 28–48 (VVFLGVYSLTVVGNSTLIVLI) threads the bilayer. Over 49-64 (CNDSHLHTPMYFVVGN) the chain is Cytoplasmic. A helical membrane pass occupies residues 65–85 (LSFLDLWYSSVYTPKILVICI). The Extracellular portion of the chain corresponds to 86 to 96 (SEDKSISFAGC). An intrachain disulfide couples Cys96 to Cys178. A helical transmembrane segment spans residues 97–117 (LCQFFFSAGLAYSECCLLAAM). The Cytoplasmic portion of the chain corresponds to 118-138 (AYDRYVAISKPLLYAQAMSIK). Residues 139 to 159 (LCALLVAVSYCGGFINSSIIT) form a helical membrane-spanning segment. At 160 to 200 (KKTFSFNFCCENIIDDFFCDLLPLVKLACGEKGCYKFLMYF) the chain is on the extracellular side. A helical membrane pass occupies residues 201 to 221 (LLASNVICPAVLILASYLFII). Topologically, residues 222 to 239 (TSVLRISSSQGRLKAFST) are cytoplasmic. Residues 240 to 260 (CSSHLTSVTLYYGSILYIYAL) traverse the membrane as a helical segment. The Extracellular portion of the chain corresponds to 261-271 (PRSSYSFDMDK). The helical transmembrane segment at 272 to 291 (IVSTFYTEVLPMLNPMIYSL) threads the bilayer. The Cytoplasmic segment spans residues 292-305 (RNKDVKEALKKLLP).

Belongs to the G-protein coupled receptor 1 family.

The protein localises to the cell membrane. Odorant receptor. The polypeptide is Olfactory receptor 9G9 (OR9G9) (Homo sapiens (Human)).